The sequence spans 174 residues: Large ribosomal subunit protein uL16 (174 aa).

The protein belongs to the universal ribosomal protein uL16 family.

This chain is Large ribosomal subunit protein uL16, found in Methanocaldococcus jannaschii (strain ATCC 43067 / DSM 2661 / JAL-1 / JCM 10045 / NBRC 100440) (Methanococcus jannaschii).